Consider the following 142-residue polypeptide: Large ribosomal subunit protein uL13 (142 aa).

It belongs to the universal ribosomal protein uL13 family. As to quaternary structure, part of the 50S ribosomal subunit.

Functionally, this protein is one of the early assembly proteins of the 50S ribosomal subunit, although it is not seen to bind rRNA by itself. It is important during the early stages of 50S assembly. The protein is Large ribosomal subunit protein uL13 of Bordetella avium (strain 197N).